The following is a 1561-amino-acid chain: Sterile alpha motif domain-containing protein 9-like (1561 aa).

Residues 14 to 79 form the SAM domain; sequence WTKEHVRKWV…RMYNKLISSP (66 aa). The segment at 78 to 157 is disordered; sequence SPESHNQDSR…DNKPKPEQMS (80 aa). Basic and acidic residues-rich tracts occupy residues 82 to 107 and 142 to 153; these read HNQD…KNEE and VTKDMEDNKPKP.

In terms of assembly, interacts with EEA1.

It is found in the early endosome. The protein localises to the mitochondrion. In terms of biological role, may be involved in endosome fusion. Mediates down-regulation of growth factor signaling via internalization of growth factor receptors. The protein is Sterile alpha motif domain-containing protein 9-like (Samd9l) of Mus musculus (Mouse).